Reading from the N-terminus, the 539-residue chain is Phosphoenolpyruvate carboxykinase (ATP) (539 aa).

R64, Y206, and K212 together coordinate substrate. ATP-binding positions include K212, H231, and 247 to 255 (GLSGTGKTT). Residues K212 and H231 each coordinate Mn(2+). D268 contributes to the Mn(2+) binding site. ATP-binding positions include E296, R332, 448-449 (RI), and T454. R332 provides a ligand contact to substrate.

It belongs to the phosphoenolpyruvate carboxykinase (ATP) family. In terms of assembly, monomer. The cofactor is Mn(2+).

The protein resides in the cytoplasm. The catalysed reaction is oxaloacetate + ATP = phosphoenolpyruvate + ADP + CO2. It functions in the pathway carbohydrate biosynthesis; gluconeogenesis. Its function is as follows. Involved in the gluconeogenesis. Catalyzes the conversion of oxaloacetate (OAA) to phosphoenolpyruvate (PEP) through direct phosphoryl transfer between the nucleoside triphosphate and OAA. This Citrobacter koseri (strain ATCC BAA-895 / CDC 4225-83 / SGSC4696) protein is Phosphoenolpyruvate carboxykinase (ATP).